A 162-amino-acid chain; its full sequence is MVDPARARKLAKRIGTIVATAIDHEIKDPRLAFVTVTDTKVTADLHDATVYYTVMGADLESEPDLAAAAAGLEKAKGVLRSKVGAGTGVRFTPTLTFVADTVPDTARHMEELLARARAADDEVARVAAGASPAGDPDPYKEPRAEDADDAEVDEPSGSRQAD.

Residues 121–162 (DEVARVAAGASPAGDPDPYKEPRAEDADDAEVDEPSGSRQAD) are disordered. Low complexity predominate over residues 125-136 (RVAAGASPAGDP).

Belongs to the RbfA family. Monomer. Binds 30S ribosomal subunits, but not 50S ribosomal subunits or 70S ribosomes.

The protein localises to the cytoplasm. One of several proteins that assist in the late maturation steps of the functional core of the 30S ribosomal subunit. Associates with free 30S ribosomal subunits (but not with 30S subunits that are part of 70S ribosomes or polysomes). Required for efficient processing of 16S rRNA. May interact with the 5'-terminal helix region of 16S rRNA. In Rhodococcus jostii (strain RHA1), this protein is Ribosome-binding factor A.